The primary structure comprises 242 residues: MDIKLKDFEGPLDLLLHLVSKYKMDIYDVPITEVIEQYLAYVSTLQAMRLEVTGEYMVMASQLMLIKSRKLLPKVAEVTDLEDDLEQDLLSQIEEYRKFKLLGEHLEAKHQERAQYYSKAPRELMYEDAELVHDKTTIDLFLAFSNILAKKKEEFAQNHTTILRDEYKIEDMMIIVKESLTGRDQLRLQDLFKEAQNVQEVITLFLATLELIKTQELILVQEESFGDIYLMEKKEESQVAQS.

This sequence belongs to the ScpA family. In terms of assembly, component of a cohesin-like complex composed of ScpA, ScpB and the Smc homodimer, in which ScpA and ScpB bind to the head domain of Smc. The presence of the three proteins is required for the association of the complex with DNA.

The protein resides in the cytoplasm. Its function is as follows. Participates in chromosomal partition during cell division. May act via the formation of a condensin-like complex containing Smc and ScpB that pull DNA away from mid-cell into both cell halves. The sequence is that of Segregation and condensation protein A from Streptococcus mitis.